The following is a 93-amino-acid chain: YcgL domain-containing protein Shal_1837 (93 aa).

One can recognise a YcgL domain in the interval Met-1–Lys-85.

This is YcgL domain-containing protein Shal_1837 from Shewanella halifaxensis (strain HAW-EB4).